We begin with the raw amino-acid sequence, 699 residues long: Mannan-binding lectin serine protease 1 (699 aa).

The N-terminal stretch at 1 to 19 (MRWLLLYYALCFSLSKASA) is a signal peptide. Positions 20-138 (HTVELNNMFG…TGFDAHYMAV (119 aa)) constitute a CUB 1 domain. The segment at 20–184 (HTVELNNMFG…HTDNRTCRVE (165 aa)) is homodimerization. Residues 20–184 (HTVELNNMFG…HTDNRTCRVE (165 aa)) form an interaction with MBL2 region. Positions 20-278 (HTVELNNMFG…STQSHSVLIL (259 aa)) are interaction with FCN2. N-linked (GlcNAc...) asparagine glycosylation is present at Asn49. Positions 68, 76, 121, 123, 139, 140, and 142 each coordinate Ca(2+). A disulfide bridge links Cys73 with Cys91. An EGF-like; calcium-binding domain is found at 139–182 (DVDECKEREDEELSCDHYCHNYIGGYYCSCRFGYILHTDNRTCR). 4 disulfides stabilise this stretch: Cys143–Cys157, Cys153–Cys166, Cys168–Cys181, and Cys185–Cys212. Residues Asn159, Tyr160, and Gly163 each coordinate Ca(2+). (3R)-3-hydroxyasparagine is present on Asn159. Residue Asn178 is glycosylated (N-linked (GlcNAc...) (complex) asparagine). Residues 185–297 (CSDNLFTQRT…RGWRLSYRAA (113 aa)) form the CUB 2 domain. Glu235, Asp245, Asp282, and Ser284 together coordinate Ca(2+). A disulfide bridge connects residues Cys242 and Cys260. 2 Sushi domains span residues 299–364 (NECP…TCKI) and 365–434 (VDCR…TCLP). 6 disulfide bridges follow: Cys301–Cys349, Cys329–Cys362, Cys367–Cys414, Cys397–Cys432, Cys436–Cys572, and Cys475–Cys491. An N-linked (GlcNAc...) (complex) asparagine glycan is attached at Asn385. N-linked (GlcNAc...) asparagine glycosylation occurs at Asn407. The 248-residue stretch at 449–696 (IFNGRPAQKG…NKDWIQRVTG (248 aa)) folds into the Peptidase S1 domain. The Charge relay system role is filled by His490. Leu533 carries an N-linked (GlcNAc) asparagine glycan. The active-site Charge relay system is Asp552. Glu599 is a glycosylation site (N-linked (GlcNAc) asparagine). Disulfide bonds link Cys614–Cys631 and Cys642–Cys672. The Charge relay system role is filled by Ser646.

The protein belongs to the peptidase S1 family. As to quaternary structure, homodimer. Interacts with the oligomeric lectins MBL2, FCN2 and FCN3; triggers the lectin pathway of complement through activation of C3. Interacts with SERPING1. Interacts with COLEC11; probably triggers the lectin pathway of complement. Post-translationally, the iron and 2-oxoglutarate dependent 3-hydroxylation of aspartate and asparagine is (R) stereospecific within EGF domains. N-glycosylated. Some N-linked glycan are of the complex-type. In terms of processing, autoproteolytic processing of the proenzyme produces the active enzyme composed on the heavy and the light chain held together by a disulfide bond. Isoform 1 but not isoform 2 is activated through autoproteolytic processing. Protein of the plasma which is primarily expressed by liver.

The protein resides in the secreted. Inhibited by SERPING1 and A2M. Its function is as follows. Functions in the lectin pathway of complement, which performs a key role in innate immunity by recognizing pathogens through patterns of sugar moieties and neutralizing them. The lectin pathway is triggered upon binding of mannan-binding lectin (MBL) and ficolins to sugar moieties which leads to activation of the associated proteases MASP1 and MASP2. Functions as an endopeptidase and may activate MASP2 or C2 or directly activate C3 the key component of complement reaction. Isoform 2 may have an inhibitory effect on the activation of the lectin pathway of complement or may cleave IGFBP5. Also plays a role in development. In Homo sapiens (Human), this protein is Mannan-binding lectin serine protease 1 (MASP1).